The sequence spans 469 residues: Citrate synthase, mitochondrial (469 aa).

The N-terminal 30 residues, 1–30, are a transit peptide targeting the mitochondrion; that stretch reads MSFLTVSRLAPKLLNSKNATYFLVAARNAS. Residues His304 and His350 contribute to the active site. Arg359 lines the oxaloacetate pocket. Asp405 is a catalytic residue. Oxaloacetate contacts are provided by Arg431 and Arg451.

It belongs to the citrate synthase family. In terms of assembly, homodimer.

It is found in the mitochondrion matrix. It catalyses the reaction oxaloacetate + acetyl-CoA + H2O = citrate + CoA + H(+). It participates in carbohydrate metabolism; tricarboxylic acid cycle; isocitrate from oxaloacetate: step 1/2. Key enzyme of the Krebs tricarboxylic acid cycle which catalyzes the synthesis of citrate from acetyl coenzyme A and oxaloacetate. The chain is Citrate synthase, mitochondrial (cs) from Kajikia audax (Striped marlin).